The following is a 212-amino-acid chain: Pyridoxine/pyridoxamine 5'-phosphate oxidase (212 aa).

FMN contacts are provided by residues 61 to 66 (RTVLLK), 76 to 77 (FT), Lys82, Lys83, and Gln105. Substrate is bound at residue Lys66. Substrate-binding residues include Tyr123, Arg127, and Ser131. Residues 140–141 (QS) and Trp185 contribute to the FMN site. 191–193 (RLH) contributes to the substrate binding site. An FMN-binding site is contributed by Arg195.

This sequence belongs to the pyridoxamine 5'-phosphate oxidase family. In terms of assembly, homodimer. It depends on FMN as a cofactor.

The catalysed reaction is pyridoxamine 5'-phosphate + O2 + H2O = pyridoxal 5'-phosphate + H2O2 + NH4(+). The enzyme catalyses pyridoxine 5'-phosphate + O2 = pyridoxal 5'-phosphate + H2O2. The protein operates within cofactor metabolism; pyridoxal 5'-phosphate salvage; pyridoxal 5'-phosphate from pyridoxamine 5'-phosphate: step 1/1. It participates in cofactor metabolism; pyridoxal 5'-phosphate salvage; pyridoxal 5'-phosphate from pyridoxine 5'-phosphate: step 1/1. Its function is as follows. Catalyzes the oxidation of either pyridoxine 5'-phosphate (PNP) or pyridoxamine 5'-phosphate (PMP) into pyridoxal 5'-phosphate (PLP). The chain is Pyridoxine/pyridoxamine 5'-phosphate oxidase from Vesicomyosocius okutanii subsp. Calyptogena okutanii (strain HA).